A 160-amino-acid chain; its full sequence is 6,7-dimethyl-8-ribityllumazine synthase (160 aa).

Residues Trp31, Ser65–Glu67, and Cys89–Val91 contribute to the 5-amino-6-(D-ribitylamino)uracil site. Asp94–Thr95 lines the (2S)-2-hydroxy-3-oxobutyl phosphate pocket. Catalysis depends on His97, which acts as the Proton donor. Phe122 contacts 5-amino-6-(D-ribitylamino)uracil. Arg136 is a binding site for (2S)-2-hydroxy-3-oxobutyl phosphate.

Belongs to the DMRL synthase family.

The catalysed reaction is (2S)-2-hydroxy-3-oxobutyl phosphate + 5-amino-6-(D-ribitylamino)uracil = 6,7-dimethyl-8-(1-D-ribityl)lumazine + phosphate + 2 H2O + H(+). Its pathway is cofactor biosynthesis; riboflavin biosynthesis; riboflavin from 2-hydroxy-3-oxobutyl phosphate and 5-amino-6-(D-ribitylamino)uracil: step 1/2. Catalyzes the formation of 6,7-dimethyl-8-ribityllumazine by condensation of 5-amino-6-(D-ribitylamino)uracil with 3,4-dihydroxy-2-butanone 4-phosphate. This is the penultimate step in the biosynthesis of riboflavin. The chain is 6,7-dimethyl-8-ribityllumazine synthase from Parabacteroides distasonis (strain ATCC 8503 / DSM 20701 / CIP 104284 / JCM 5825 / NCTC 11152).